The sequence spans 228 residues: Phosphatidylglycerophosphate phosphatase PTPMT2 (228 aa).

Residues 1 to 10 (MTDETEEDDT) are compositionally biased toward acidic residues. The tract at residues 1–30 (MTDETEEDDTTQQRSSRNDGVSKNKGKGFK) is disordered. The substrate site is built by Y48 and D126. The 148-residue stretch at 66–213 (WWDQIDEYLL…VEEFSRLQSP (148 aa)) folds into the Tyrosine-protein phosphatase domain. C157 serves as the catalytic Phosphocysteine intermediate. The Glucan phosphatase signature motif CXAGXGR motif lies at 157–163 (CKAGRGR). 158–163 (KAGRGR) is a substrate binding site.

Belongs to the protein-tyrosine phosphatase family. Non-receptor class dual specificity subfamily. As to expression, expressed in roots, leaves, stems and flowers. Expressed at low levels in stems and flowers.

The catalysed reaction is O-phospho-L-seryl-[protein] + H2O = L-seryl-[protein] + phosphate. The enzyme catalyses O-phospho-L-threonyl-[protein] + H2O = L-threonyl-[protein] + phosphate. It carries out the reaction O-phospho-L-tyrosyl-[protein] + H2O = L-tyrosyl-[protein] + phosphate. It catalyses the reaction a 1,2-diacyl-sn-glycero-3-phospho-(1'-sn-glycero-3'-phosphate) + H2O = a 1,2-diacyl-sn-glycero-3-phospho-(1'-sn-glycerol) + phosphate. It functions in the pathway phospholipid metabolism; phosphatidylglycerol biosynthesis; phosphatidylglycerol from CDP-diacylglycerol: step 2/2. Exhibits phosphatidylglycerophosphate phosphatase activity. Involved in root growth and columella cells organization. May possess protein phosphatase activity. This chain is Phosphatidylglycerophosphate phosphatase PTPMT2, found in Arabidopsis thaliana (Mouse-ear cress).